We begin with the raw amino-acid sequence, 115 residues long: Large ribosomal subunit protein uL22c (115 aa).

It belongs to the universal ribosomal protein uL22 family. In terms of assembly, part of the 50S ribosomal subunit.

The protein resides in the plastid. Its subcellular location is the chloroplast. Its function is as follows. This protein binds specifically to 23S rRNA. Functionally, the globular domain of the protein is located near the polypeptide exit tunnel on the outside of the subunit, while an extended beta-hairpin is found that lines the wall of the exit tunnel in the center of the 70S ribosome. The protein is Large ribosomal subunit protein uL22c (rpl22) of Thalassiosira pseudonana (Marine diatom).